Reading from the N-terminus, the 692-residue chain is Methionine--tRNA ligase (692 aa).

The short motif at 12-22 (PYANGSFHIGH) is the 'HIGH' region element. 4 residues coordinate Zn(2+): cysteine 143, cysteine 146, cysteine 156, and cysteine 159. The 'KMSKS' region motif lies at 341–345 (KMSKS). Residue lysine 344 coordinates ATP. A tRNA-binding domain is found at 586-692 (DFAKIDLRIA…PGAQPGMRVR (107 aa)).

It belongs to the class-I aminoacyl-tRNA synthetase family. MetG type 1 subfamily. As to quaternary structure, homodimer. Zn(2+) is required as a cofactor.

Its subcellular location is the cytoplasm. It catalyses the reaction tRNA(Met) + L-methionine + ATP = L-methionyl-tRNA(Met) + AMP + diphosphate. In terms of biological role, is required not only for elongation of protein synthesis but also for the initiation of all mRNA translation through initiator tRNA(fMet) aminoacylation. In Bordetella pertussis (strain Tohama I / ATCC BAA-589 / NCTC 13251), this protein is Methionine--tRNA ligase.